A 259-amino-acid chain; its full sequence is Adenosylcobinamide-GDP ribazoletransferase (259 aa).

6 consecutive transmembrane segments (helical) span residues 27–47 (ITFL…ILYI), 51–71 (FSHL…NGLN), 100–120 (VGAG…LSLA), 124–144 (LYIG…SMMI), 175–195 (FLAI…VIVA), and 219–239 (VIGF…IIIA).

The protein belongs to the CobS family. Requires Mg(2+) as cofactor.

Its subcellular location is the cell membrane. It catalyses the reaction alpha-ribazole + adenosylcob(III)inamide-GDP = adenosylcob(III)alamin + GMP + H(+). The catalysed reaction is alpha-ribazole 5'-phosphate + adenosylcob(III)inamide-GDP = adenosylcob(III)alamin 5'-phosphate + GMP + H(+). Its pathway is cofactor biosynthesis; adenosylcobalamin biosynthesis; adenosylcobalamin from cob(II)yrinate a,c-diamide: step 7/7. Functionally, joins adenosylcobinamide-GDP and alpha-ribazole to generate adenosylcobalamin (Ado-cobalamin). Also synthesizes adenosylcobalamin 5'-phosphate from adenosylcobinamide-GDP and alpha-ribazole 5'-phosphate. The chain is Adenosylcobinamide-GDP ribazoletransferase from Thermoplasma volcanium (strain ATCC 51530 / DSM 4299 / JCM 9571 / NBRC 15438 / GSS1).